The following is a 265-amino-acid chain: Undecaprenyl-diphosphatase 1 (265 aa).

Transmembrane regions (helical) follow at residues 4 to 24 (IIIA…PISS), 42 to 62 (AKTF…ILYH), 84 to 104 (FHVF…HDVI), 108 to 128 (LFQP…MILA), 184 to 204 (SEFS…LDLL), 217 to 237 (MFAV…VTFL), and 245 to 265 (LKPF…FVLL).

It belongs to the UppP family.

It localises to the cell membrane. The enzyme catalyses di-trans,octa-cis-undecaprenyl diphosphate + H2O = di-trans,octa-cis-undecaprenyl phosphate + phosphate + H(+). Functionally, catalyzes the dephosphorylation of undecaprenyl diphosphate (UPP). Confers resistance to bacitracin. The protein is Undecaprenyl-diphosphatase 1 of Bacillus cereus (strain ZK / E33L).